A 100-amino-acid polypeptide reads, in one-letter code: MTLTKAELADILVDKVSNVTKNDAKEIVELFFEEIRSTLASGEEIKISGFGNFQLRDKPQRPGRNPKTGEEVPITARRVVTFHASQKLKGMVEHYYDKQR.

The interval 53 to 72 (FQLRDKPQRPGRNPKTGEEV) is disordered.

This sequence belongs to the bacterial histone-like protein family. As to quaternary structure, heterodimer of an alpha and a beta chain.

Functionally, this protein is one of the two subunits of integration host factor, a specific DNA-binding protein that functions in genetic recombination as well as in transcriptional and translational control. This Neisseria gonorrhoeae (strain ATCC 700825 / FA 1090) protein is Integration host factor subunit alpha.